The sequence spans 155 residues: Small ribosomal subunit protein uS7c (155 aa).

Belongs to the universal ribosomal protein uS7 family. Part of the 30S ribosomal subunit.

It is found in the plastid. Its subcellular location is the chloroplast. Functionally, one of the primary rRNA binding proteins, it binds directly to 16S rRNA where it nucleates assembly of the head domain of the 30S subunit. The polypeptide is Small ribosomal subunit protein uS7c (rps7) (Chaetosphaeridium globosum (Charophycean green alga)).